A 106-amino-acid polypeptide reads, in one-letter code: MVTVNRLVLSGTVCKTPIRKVSPSGIPHCQFVLEHRSTQEEAGLSRQAWCRMPVIVSGLSSQAVTHSITVGTQLTVHGFISCHQGRNGLSKIVLHAEQIELIDSGD.

One can recognise an SSB domain in the interval 4 to 103 (VNRLVLSGTV…LHAEQIELID (100 aa)).

Belongs to the PriB family. As to quaternary structure, homodimer. Interacts with PriA and DnaT. Component of the replication restart primosome. Primosome assembly occurs via a 'hand-off' mechanism. PriA binds to replication forks, subsequently PriB then DnaT bind; DnaT then displaces ssDNA to generate the helicase loading substrate.

Functionally, involved in the restart of stalled replication forks, which reloads the replicative helicase on sites other than the origin of replication; the PriA-PriB pathway is the major replication restart pathway. During primosome assembly it facilitates complex formation between PriA and DnaT on DNA; stabilizes PriA on DNA. Stimulates the DNA unwinding activity of PriA helicase. The chain is Replication restart protein PriB from Pectobacterium carotovorum subsp. carotovorum (strain PC1).